A 210-amino-acid chain; its full sequence is Large ribosomal subunit protein uL3 (210 aa).

Gln151 is modified (N5-methylglutamine).

It belongs to the universal ribosomal protein uL3 family. Part of the 50S ribosomal subunit. Forms a cluster with proteins L14 and L19. Methylated by PrmB.

In terms of biological role, one of the primary rRNA binding proteins, it binds directly near the 3'-end of the 23S rRNA, where it nucleates assembly of the 50S subunit. The protein is Large ribosomal subunit protein uL3 of Aeromonas hydrophila subsp. hydrophila (strain ATCC 7966 / DSM 30187 / BCRC 13018 / CCUG 14551 / JCM 1027 / KCTC 2358 / NCIMB 9240 / NCTC 8049).